A 111-amino-acid polypeptide reads, in one-letter code: MLVLVMVVLFTLVLLFVFYIGNFVLSCKDFYKNKISSFECGFVSIGKIQNSFSIHFFIMMLMFVIFDLEVVMFLGILVSDLNSLISFFMLLMFIFGGFYMEWWYGKLVWLI.

3 consecutive transmembrane segments (helical) span residues 1 to 21 (MLVL…FYIG), 56 to 76 (FFIM…FLGI), and 84 to 104 (LISF…EWWY).

The protein belongs to the complex I subunit 3 family.

It is found in the mitochondrion membrane. The enzyme catalyses a ubiquinone + NADH + 5 H(+)(in) = a ubiquinol + NAD(+) + 4 H(+)(out). Functionally, core subunit of the mitochondrial membrane respiratory chain NADH dehydrogenase (Complex I) that is believed to belong to the minimal assembly required for catalysis. Complex I functions in the transfer of electrons from NADH to the respiratory chain. The immediate electron acceptor for the enzyme is believed to be ubiquinone. This chain is NADH-ubiquinone oxidoreductase chain 3 (ND3), found in Ascaris suum (Pig roundworm).